The sequence spans 176 residues: Large ribosomal subunit protein uL5 (176 aa).

Belongs to the universal ribosomal protein uL5 family. Part of the 50S ribosomal subunit; contacts the 5S rRNA and probably tRNA. Forms a bridge to the 30S subunit in the 70S ribosome.

In terms of biological role, this is one of the proteins that bind and probably mediate the attachment of the 5S RNA into the large ribosomal subunit, where it forms part of the central protuberance. In the 70S ribosome it contacts protein S13 of the 30S subunit (bridge B1b), connecting the 2 subunits; this bridge is implicated in subunit movement. May contact the P site tRNA; the 5S rRNA and some of its associated proteins might help stabilize positioning of ribosome-bound tRNAs. This is Large ribosomal subunit protein uL5 from Picrophilus torridus (strain ATCC 700027 / DSM 9790 / JCM 10055 / NBRC 100828 / KAW 2/3).